The primary structure comprises 86 residues: MNKRVLLVIFFVTLLIADEVNSFSFFRKAKGFLKKIWKSKIARRLREKGMKALKNYANDVINGPAEAPAAAAAPEEPPVEQRRRRR.

Residues 1 to 22 (MNKRVLLVIFFVTLLIADEVNS) form the signal peptide. The tract at residues 67–86 (APAAAAAPEEPPVEQRRRRR) is disordered.

It belongs to the non-disulfide-bridged peptide (NDBP) superfamily. Long chain multifunctional peptide (group 2) family. In terms of tissue distribution, expressed by the venom gland.

It localises to the secreted. Functionally, inhibits angiotensin-converting enzyme (ACE), but does not serve as substrate for the enzyme. Potentiates bradykinin (BK) on the isolated guinea pig ileum as well as the isolated rat uterus for contraction. Also potentiates in vivo the depressor effect of BK on arterial blood pressure in the normotensive anesthetized rat. The chain is Bradykinin-potentiating peptide 25.12 from Lychas mucronatus (Chinese swimming scorpion).